Here is a 579-residue protein sequence, read N- to C-terminus: MSVTGFTITDEKVHLYHSIEKEKTVRHIGDLCSSHSVKKIQVGICLLLVELCERFTFFEVVCNMIPFCTIKLGYHNCQAAILNLCFIGTSILTPVFVRWLTDVYLGRNKLVYICLFLHFLGTALLSVVAFPLEDFYLGTYHAVNNIPKTEQHRLFYVALLTICLGIGGVRAIVCPLGAFGLQEYGSQKTMSFFNWFYWLMNLNATIVFLGISYIQHSQAWALVLLIPFMSMLMAVITLHMIYYNLIYQSEKRCSLLTGVGVLVSALKTCHPQYCHLGRDVTSQLDHAKEKNGGCYSELHVEDTTFFLTLLPLFIFQLLYRMCIMQIPSGYYLQTMNSNLNLDGFLLPIAVMNAISSLPLLILAPFLEYFSTCLFPSKRVGSFLSTCIIAGNLFAALSVMIAGFFEIHRKHFPAVEQPLSGKVLTVSSMPCFYLILQYVLLGVAETLVNPALSVISYRFVPSNVRGTSMNFLTLFNGFGCFTGALLVKLVYLISDGNWFPNTLNKGNLESFFFFLASLTLLNVLGFCSVSQRYCNLNHFNAQNIRGSNLEETLLLHEKSLKFYGSIQEFSSSIDLWETAL.

A run of 11 helical transmembrane segments spans residues 77-97 (CQAA…PVFV), 110-130 (LVYI…VVAF), 154-174 (LFYV…AIVC), 191-211 (SFFN…FLGI), 221-241 (ALVL…LHMI), 304-324 (TFFL…MCIM), 343-363 (GFLL…LILA), 386-406 (CIIA…FFEI), 422-442 (VLTV…LLGV), 472-492 (TLFN…VYLI), and 509-529 (SFFF…CSVS).

The protein belongs to the major facilitator superfamily. Proton-dependent oligopeptide transporter (POT/PTR) (TC 2.A.17) family.

Its subcellular location is the membrane. Proton oligopeptide cotransporter. The chain is Solute carrier family 15 member 5 (SLC15A5) from Homo sapiens (Human).